An 86-amino-acid chain; its full sequence is MTEARRRQFKVGRVVSNKMQKTVVVAVDYLKPHPLYRKIIRRTSKFHAHDEQQCRIGDIVRIGETRPLSKTKRWEVVEIIKRNEEA.

This sequence belongs to the universal ribosomal protein uS17 family. Part of the 30S ribosomal subunit.

One of the primary rRNA binding proteins, it binds specifically to the 5'-end of 16S ribosomal RNA. This is Small ribosomal subunit protein uS17 from Roseiflexus sp. (strain RS-1).